The sequence spans 57 residues: Large ribosomal subunit protein bL32 (57 aa).

The protein belongs to the bacterial ribosomal protein bL32 family.

The polypeptide is Large ribosomal subunit protein bL32 (Shouchella clausii (strain KSM-K16) (Alkalihalobacillus clausii)).